Here is a 101-residue protein sequence, read N- to C-terminus: Large ribosomal subunit protein uL23 (101 aa).

The protein belongs to the universal ribosomal protein uL23 family. As to quaternary structure, part of the 50S ribosomal subunit. Contacts protein L29, and trigger factor when it is bound to the ribosome.

One of the early assembly proteins it binds 23S rRNA. One of the proteins that surrounds the polypeptide exit tunnel on the outside of the ribosome. Forms the main docking site for trigger factor binding to the ribosome. This Lactobacillus helveticus (strain DPC 4571) protein is Large ribosomal subunit protein uL23.